The sequence spans 155 residues: Ribonuclease H (155 aa).

The RNase H type-1 domain maps to 5–146 (DQKPVIIHTD…ADQLARDGLT (142 aa)). Mg(2+) is bound by residues Asp-14, Glu-52, Asp-74, and Asp-138. Residues 133 to 155 (ENERADQLARDGLTENRMKSRVK) form a disordered region.

It belongs to the RNase H family. Monomer. It depends on Mg(2+) as a cofactor.

The protein resides in the cytoplasm. The catalysed reaction is Endonucleolytic cleavage to 5'-phosphomonoester.. Endonuclease that specifically degrades the RNA of RNA-DNA hybrids. The polypeptide is Ribonuclease H (Rhodopseudomonas palustris (strain ATCC BAA-98 / CGA009)).